The sequence spans 186 residues: Potassium-transporting ATPase KdpC subunit (186 aa).

The chain crosses the membrane as a helical span at residues Leu10–Gly30.

It belongs to the KdpC family. The system is composed of three essential subunits: KdpA, KdpB and KdpC.

Its subcellular location is the cell membrane. Functionally, part of the high-affinity ATP-driven potassium transport (or Kdp) system, which catalyzes the hydrolysis of ATP coupled with the electrogenic transport of potassium into the cytoplasm. This subunit acts as a catalytic chaperone that increases the ATP-binding affinity of the ATP-hydrolyzing subunit KdpB by the formation of a transient KdpB/KdpC/ATP ternary complex. The protein is Potassium-transporting ATPase KdpC subunit of Staphylococcus aureus (strain COL).